Consider the following 284-residue polypeptide: RNA polymerase sigma factor RpoH (284 aa).

A sigma-70 factor domain-2 region spans residues 53–122; the sequence is LILSHLRFVV…IHEYVLRNWR (70 aa). The Interaction with polymerase core subunit RpoC signature appears at 77-80; it reads DLIQ. Residues 228–280 are sigma-70 factor domain-4; the sequence is AMQGLDERSQDIIRARWLDEDNKSTLQELADRYGVSAERVRQLEKNAMKKLRA. The segment at residues 253 to 272 is a DNA-binding region (H-T-H motif); the sequence is LQELADRYGVSAERVRQLEK.

The protein belongs to the sigma-70 factor family. RpoH subfamily. As to quaternary structure, interacts with the RNA polymerase core enzyme.

The protein resides in the cytoplasm. In terms of biological role, sigma factors are initiation factors that promote the attachment of RNA polymerase to specific initiation sites and are then released. This sigma factor is involved in regulation of expression of heat shock genes. The polypeptide is RNA polymerase sigma factor RpoH (Escherichia coli O6:H1 (strain CFT073 / ATCC 700928 / UPEC)).